The following is a 461-amino-acid chain: Deoxyguanosinetriphosphate triphosphohydrolase-like protein (461 aa).

The interval 22 to 41 is disordered; it reads ERFLPDPPREKDNRPPFRRD. Residues 24 to 41 are compositionally biased toward basic and acidic residues; the sequence is FLPDPPREKDNRPPFRRD. The HD domain maps to 72–285; the sequence is RLTHSLEVAQ…MELADDIAYG (214 aa).

It belongs to the dGTPase family. Type 2 subfamily.

The protein is Deoxyguanosinetriphosphate triphosphohydrolase-like protein of Haemophilus influenzae (strain PittGG).